The following is a 524-amino-acid chain: Excitatory amino acid transporter 3 (524 aa).

Over 1–18 (MGKPARKGCDWKRFLRNN) the chain is Cytoplasmic. Residues 19 to 38 (WLLLSTVVAVVLGIVIGVLV) traverse the membrane as a helical segment. At 39–61 (REYSKLSNLEKFYFSFPGEILMR) the chain is on the extracellular side. Residues 62–82 (MLKLVILPLIVSSMITGVATL) form a helical membrane-spanning segment. Over 83–93 (DSNVSGKIGLR) the chain is Cytoplasmic. A helical transmembrane segment spans residues 94–114 (AVVYYFCTTLIAVILGIVLVV). Na(+) is bound by residues Tyr98, Thr101, and Thr102. Topologically, residues 115–205 (SIKPGVTQKV…KTKEYKVVGM (91 aa)) are extracellular. 2 N-linked (GlcNAc...) asparagine glycosylation sites follow: Asn178 and Asn195. A helical membrane pass occupies residues 206 to 229 (YSDGINVLGLIVFCLVLGIVIGRK). The Cytoplasmic segment spans residues 230–238 (WEKGQILVD). Residues 239–266 (FFNALSDATMKIVQIIMCYMPIGILFLI) traverse the membrane as a helical segment. Topologically, residues 267–286 (AGKIIEVEDWEIFRKLGLYM) are extracellular. Residues 287–308 (ATVLSGLAIHSIVILPLIYFII) form a helical membrane-spanning segment. Topologically, residues 309–313 (VRKNP) are cytoplasmic. The segment at residues 314–344 (FQFAMGMAQALLTALMISSSSATLPVTFRCA) is an intramembrane region (discontinuously helical). L-aspartate contacts are provided by Ser331 and Ser333. Residues 345–353 (EEKNRVDKR) are Cytoplasmic-facing. The chain crosses the membrane as a helical span at residues 354–380 (ITRFVLPVGATINMDGTALYEAVAAVF). 4 residues coordinate Na(+): Gly362, Thr364, Asn366, and Asp368. L-aspartate is bound at residue Thr370. The Extracellular portion of the chain corresponds to 381–393 (IAQLNDLDLSVGQ). The discontinuously helical intramembrane region spans 394–427 (IITISVTATAASIGAAGVPQPGLVTMVIVLSAVG). The Na(+) site is built by Ser405, Ile406, and Ala408. Val411 is an L-aspartate binding site. At 428 to 440 (LPAEDVTLIIAVD) the chain is on the extracellular side. Residues 441-462 (WLLDRFRTMVNVLGDAFGTGIV) form a helical membrane-spanning segment. The L-aspartate site is built by Arg447, Thr448, and Asn451. The Na(+) site is built by Asn451 and Asp455. At 463-524 (EKLSKKELEQ…TISFTQTSQF (62 aa)) the chain is on the cytoplasmic side. Phosphoserine is present on residues Ser517 and Ser522.

The protein belongs to the dicarboxylate/amino acid:cation symporter (DAACS) (TC 2.A.23) family. SLC1A1 subfamily. As to quaternary structure, homotrimer. Interacts with ARL6IP5. Interacts with RTN2 (via N-terminus); the interaction promotes cell surface expression of SLC1A1. Interacts with SORCS2; this interaction is important for normal expression at the cell membrane.

It is found in the cell membrane. The protein localises to the apical cell membrane. It localises to the synapse. The protein resides in the synaptosome. Its subcellular location is the early endosome membrane. It is found in the late endosome membrane. The protein localises to the recycling endosome membrane. The enzyme catalyses K(+)(in) + L-glutamate(out) + 3 Na(+)(out) + H(+)(out) = K(+)(out) + L-glutamate(in) + 3 Na(+)(in) + H(+)(in). It carries out the reaction K(+)(in) + L-aspartate(out) + 3 Na(+)(out) + H(+)(out) = K(+)(out) + L-aspartate(in) + 3 Na(+)(in) + H(+)(in). The catalysed reaction is D-aspartate(out) + K(+)(in) + 3 Na(+)(out) + H(+)(out) = D-aspartate(in) + K(+)(out) + 3 Na(+)(in) + H(+)(in). It catalyses the reaction K(+)(in) + L-cysteine(out) + 3 Na(+)(out) + H(+)(out) = K(+)(out) + L-cysteine(in) + 3 Na(+)(in) + H(+)(in). Sodium-dependent, high-affinity amino acid transporter that mediates the uptake of L-glutamate and also L-aspartate and D-aspartate. Can also transport L-cysteine. Functions as a symporter that transports one amino acid molecule together with two or three Na(+) ions and one proton, in parallel with the counter-transport of one K(+) ion. Mediates Cl(-) flux that is not coupled to amino acid transport; this avoids the accumulation of negative charges due to aspartate and Na(+) symport. Plays an important role in L-glutamate and L-aspartate reabsorption in renal tubuli. Plays a redundant role in the rapid removal of released glutamate from the synaptic cleft, which is essential for terminating the postsynaptic action of glutamate. Contributes to glutathione biosynthesis and protection against oxidative stress via its role in L-glutamate and L-cysteine transport. Negatively regulated by ARL6IP5. This Bos taurus (Bovine) protein is Excitatory amino acid transporter 3 (SLC1A1).